Here is a 72-residue protein sequence, read N- to C-terminus: Disintegrin crotatroxin (72 aa).

A Disintegrin domain is found at 1–72 (AGEECDCGSP…ADCPRNGLYG (72 aa)). Intrachain disulfides connect Cys-5–Cys-20, Cys-7–Cys-15, Cys-14–Cys-37, Cys-28–Cys-34, Cys-33–Cys-58, and Cys-46–Cys-65. The short motif at 50–52 (RGD) is the Cell attachment site element.

It belongs to the venom metalloproteinase (M12B) family. P-II subfamily. P-IIa sub-subfamily. As to quaternary structure, monomer. Expressed by the venom gland.

The protein localises to the secreted. Functionally, inhibits fibrinogen interaction with platelets. Acts by binding to the alpha-IIb/beta-3 (ITGA2B/ITGB3) on the platelet surface and inhibits aggregation induced by ADP, thrombin, platelet-activating factor and collagen. Inhibits ADP-induced platelet aggregation (IC(50) = 17.5nM), cancer cell migration in vitro, and experimental lung tumor colonization of cancer cells. The chain is Disintegrin crotatroxin from Crotalus atrox (Western diamondback rattlesnake).